The primary structure comprises 465 residues: Cysteine--tRNA ligase (465 aa).

Position 29 (C29) interacts with Zn(2+). A 'HIGH' region motif is present at residues 31-41 (PTVYNYIHIGN). Zn(2+) contacts are provided by C209, H234, and E238. A 'KMSKS' region motif is present at residues 266 to 270 (KMSKS). K269 contacts ATP. S270 is modified (phosphoserine).

This sequence belongs to the class-I aminoacyl-tRNA synthetase family. In terms of assembly, monomer. Requires Zn(2+) as cofactor.

The protein resides in the cytoplasm. The enzyme catalyses tRNA(Cys) + L-cysteine + ATP = L-cysteinyl-tRNA(Cys) + AMP + diphosphate. The protein is Cysteine--tRNA ligase of Bacillus anthracis (strain A0248).